Reading from the N-terminus, the 186-residue chain is UPF0669 protein C6orf120 homolog (186 aa).

Residues 1-19 (MVPFWAGLLVLSALPQTLG) form the signal peptide. The N-linked (GlcNAc...) asparagine glycan is linked to asparagine 47. The tract at residues 141 to 165 (KNSYSSDETPGQPRQSQGPEDTEEE) is disordered. Positions 142-159 (NSYSSDETPGQPRQSQGP) are enriched in polar residues.

Belongs to the UPF0669 family.

The protein localises to the secreted. This is UPF0669 protein C6orf120 homolog from Danio rerio (Zebrafish).